A 103-amino-acid chain; its full sequence is Large ribosomal subunit protein uL24 (103 aa).

This sequence belongs to the universal ribosomal protein uL24 family. In terms of assembly, part of the 50S ribosomal subunit.

Functionally, one of two assembly initiator proteins, it binds directly to the 5'-end of the 23S rRNA, where it nucleates assembly of the 50S subunit. Its function is as follows. One of the proteins that surrounds the polypeptide exit tunnel on the outside of the subunit. The polypeptide is Large ribosomal subunit protein uL24 (Sinorhizobium medicae (strain WSM419) (Ensifer medicae)).